The primary structure comprises 1127 residues: Nck-associated protein 1-like (1127 aa).

Residues 638 to 670 are disordered; it reads KAKNKKTRKQRQTPRKGEPERDKPGAESHRKNR. Residues 639–651 show a composition bias toward basic residues; it reads AKNKKTRKQRQTP. Positions 652-666 are enriched in basic and acidic residues; sequence RKGEPERDKPGAESH. A helical transmembrane segment spans residues 996–1016; that stretch reads VACLLLIFLAVSLPLLATDPS.

It belongs to the HEM-1/HEM-2 family. In terms of assembly, in hematopoietic cells, component of the WAVE2 complex composed of ABI1, CYFIP1/SRA1, NCKAP1L/HEM1 and WASF2/WAVE2. Interacts with ARHGAP4, PIK3C3/VPS34 and PPP1R12A/MYPT1. Interacts with mammalian target of rapamycin complex 2 (mTORC2) components, including MTOR and RICTOR. As to expression, expressed only in cells of hematopoietic origin. Expressed in neutrophils (at protein level). Expressed in T-cells (at protein level).

It is found in the cell membrane. The protein resides in the cytoplasm. Its function is as follows. Essential hematopoietic-specific regulator of the actin cytoskeleton. Controls lymphocyte development, activation, proliferation and homeostasis, erythrocyte membrane stability, as well as phagocytosis and migration by neutrophils and macrophages. Component of the WAVE2 complex which signals downstream of RAC to stimulate F-actin polymerization. Required for stabilization and/or translation of the WAVE2 complex proteins in hematopoietic cells. Within the WAVE2 complex, enables the cortical actin network to restrain excessive degranulation and granule release by T-cells. Required for efficient T-lymphocyte and neutrophil migration. Exhibits complex cycles of activation and inhibition to generate waves of propagating the assembly with actin. Also involved in mechanisms WAVE-independent to regulate myosin and actin polymerization during neutrophil chemotaxis. In T-cells, required for proper mechanistic target of rapamycin complex 2 (mTORC2)-dependent AKT phosphorylation, cell proliferation and cytokine secretion, including that of IL2 and TNF. This chain is Nck-associated protein 1-like, found in Homo sapiens (Human).